The primary structure comprises 49 residues: Large ribosomal subunit protein bL33B (49 aa).

Belongs to the bacterial ribosomal protein bL33 family.

The protein is Large ribosomal subunit protein bL33B of Bacillus anthracis.